The following is a 369-amino-acid chain: Biglycan (369 aa).

The first 16 residues, 1 to 16 (MWPLWLVASLLALSQA), serve as a signal peptide directing secretion. The propeptide occupies 17 to 37 (LPFEQKGFWDFTLDDGLPMLN). Residues Ser42 and Ser48 are each glycosylated (O-linked (Xyl...) (glycosaminoglycan) serine). Disulfide bonds link Cys64–Cys70 and Cys68–Cys77. 12 LRR repeats span residues 83-103 (KAVPKEISPDTMLLDLQNNDI), 104-127 (SELRADDFKGLHHLYALVLVNNKI), 128-151 (SKIHEKAFSPLRKLQKLYISKNHL), 152-172 (VEIPPNLPSSLVELRIHDNRI), 173-196 (RKVPKGVFSGLRNMNCIEMGGNPL), 197-221 (ENSGFEPGAFDGLKLNYLRISEAKL), 222-242 (TGIPKDLPETLNELHLDHNKI), 243-266 (QAIELEDLLRYSKLYRLGLGHNQI), 267-290 (RMIENGSLSFLPTLRELHLDNNKL), 291-313 (SRVPSGLPDLKLLQVVYLHTNNI), 314-343 (TKVGVNDFCPVGFGVKRAYYNGISLFNNPV), and 344-369 (PYWEVQPATFRCVTDRLAIQFGNYKK). Residues Asn271 and Asn312 are each glycosylated (N-linked (GlcNAc...) asparagine). Cysteines 322 and 355 form a disulfide.

It belongs to the small leucine-rich proteoglycan (SLRP) family. SLRP class I subfamily. Homodimer. Forms a ternary complex with MFAP2 and ELN. In terms of processing, the two attached glycosaminoglycan chains can be either chondroitin sulfate or dermatan sulfate.

The protein resides in the secreted. It is found in the extracellular space. Its subcellular location is the extracellular matrix. May be involved in collagen fiber assembly. This chain is Biglycan (BGN), found in Canis lupus familiaris (Dog).